Consider the following 239-residue polypeptide: tRNA (guanine-N(7)-)-methyltransferase (239 aa).

Positions 68, 93, 120, and 143 each coordinate S-adenosyl-L-methionine. The active site involves Asp143. Substrate-binding positions include Lys147, Asp180, and Thr217–Glu220.

This sequence belongs to the class I-like SAM-binding methyltransferase superfamily. TrmB family.

It catalyses the reaction guanosine(46) in tRNA + S-adenosyl-L-methionine = N(7)-methylguanosine(46) in tRNA + S-adenosyl-L-homocysteine. It functions in the pathway tRNA modification; N(7)-methylguanine-tRNA biosynthesis. In terms of biological role, catalyzes the formation of N(7)-methylguanine at position 46 (m7G46) in tRNA. This chain is tRNA (guanine-N(7)-)-methyltransferase, found in Vibrio vulnificus (strain CMCP6).